A 306-amino-acid polypeptide reads, in one-letter code: MALIGKSERFSADFVMGGAAAIVAKSAAAPIERVKLLLQNQGEMIKTGHLIRPYTGLGNCFTRIYREEGVLSFWRGNQANVIRYFPTQASNFAFKGYFKNLLGCSKEKDGYLKWFAGNVASGSAAGATTSLFLYHLDYARTRLGTDAKECSVNGKRQFKGMIDVYRKTLSSDGIKGLYRGFGVSIVGITLYRGMYFGMYDTIKPIVLVGSLEGNFLASFLLGWSITTSAGVIAYPFDTLRRRMMLTSGQPVKYRNTIHALREILKSEGFYALYRGVTANMLLGVAGAGVLAGYDQLHQIAYKHWVQ.

Solcar repeat units lie at residues 8–101 (ERFS…FKNL), 113–205 (KWFA…IKPI), and 213–299 (GNFL…LHQI). A run of 5 helical transmembrane segments spans residues 10 to 37 (FSADFVMGGAAAIVAKSAAAPIERVKLL), 78 to 102 (QANVIRYFPTQASNFAFKGYFKNLL), 111 to 131 (YLKWFAGNVASGSAAGATTSL), 181 to 202 (FGVSIVGITLYRGMYFGMYDTI), and 216 to 236 (LASFLLGWSITTSAGVIAYPF). Positions 83 and 95 each coordinate ADP. R240 is a binding site for ADP. An important for transport activity region spans residues 240 to 245 (RRRMML). The short motif at 240–245 (RRRMML) is the Nucleotide carrier signature motif element. The helical transmembrane segment at 276 to 296 (VTANMLLGVAGAGVLAGYDQL) threads the bilayer.

The protein belongs to the mitochondrial carrier (TC 2.A.29) family.

The protein resides in the endoplasmic reticulum membrane. The enzyme catalyses ADP(in) + ATP(out) = ADP(out) + ATP(in). Functionally, ADP:ATP antiporter that catalyzes the exchange of ADP and ATP across the endoplasmic reticulum membrane. The polypeptide is ADP,ATP carrier protein ER-ANT1 (ER-ANT1) (Arabidopsis thaliana (Mouse-ear cress)).